The following is a 138-amino-acid chain: ATP synthase epsilon chain (138 aa).

It belongs to the ATPase epsilon chain family. F-type ATPases have 2 components, CF(1) - the catalytic core - and CF(0) - the membrane proton channel. CF(1) has five subunits: alpha(3), beta(3), gamma(1), delta(1), epsilon(1). CF(0) has three main subunits: a, b and c.

It localises to the cellular thylakoid membrane. Functionally, produces ATP from ADP in the presence of a proton gradient across the membrane. This chain is ATP synthase epsilon chain, found in Microcystis aeruginosa (strain NIES-843 / IAM M-2473).